Reading from the N-terminus, the 832-residue chain is Dolichyl-phosphate-mannose--protein mannosyltransferase 6 (832 aa).

Residues 1–44 (MATGYSTGVSPFDLDENNHNDSIHHRHQNHHSQSHDSSGERDDT) are disordered. N-linked (GlcNAc...) asparagine glycans are attached at residues N20 and N59. The next 7 helical transmembrane spans lie at 135–155 (FYFD…GYLA), 175–194 (YVFM…PLAY), 206–227 (TCWL…SKFI), 232–252 (MLLF…TLAI), 266–286 (LEIK…SVKW), 293–311 (ALVG…YQTF), and 327–347 (LIHW…IYVA). An N-linked (GlcNAc...) asparagine glycan is attached at N357. The region spanning 383-437 (PRSVAFGSLVTIRSQGLSPNLIHSHPHNYPQGSQEQQVTTYGFKDDNNEFLFEFG) is the MIR 1 domain. N453 carries N-linked (GlcNAc...) asparagine glycosylation. 2 consecutive MIR domains span residues 466–522 (HVII…IEIQ) and 537–595 (PSEI…IEKH). Helical transmembrane passes span 676–696 (ITWI…VVGI), 723–743 (LLAA…VPFI), 755–775 (VPAL…ILNL), and 787–807 (IFKV…FWYF).

It belongs to the glycosyltransferase 39 family.

It localises to the endoplasmic reticulum membrane. It carries out the reaction a di-trans,poly-cis-dolichyl beta-D-mannosyl phosphate + L-seryl-[protein] = 3-O-(alpha-D-mannosyl)-L-seryl-[protein] + a di-trans,poly-cis-dolichyl phosphate + H(+). The catalysed reaction is a di-trans,poly-cis-dolichyl beta-D-mannosyl phosphate + L-threonyl-[protein] = 3-O-(alpha-D-mannosyl)-L-threonyl-[protein] + a di-trans,poly-cis-dolichyl phosphate + H(+). It functions in the pathway protein modification; protein glycosylation. Its function is as follows. Protein mannosyltransferase (PMT) involved in hyphal morphogenesis and drug sensitivity. Transfers mannose from Dol-P-mannose to Ser or Thr residues on proteins. PMT1, PMT2 and PMT4 account for most of the protein-O-glycosylation activity, while PMT5 and PMT6 may specifically modulate a much narrower spectrum of target proteins. Required for biofilm formation and virulence. In Candida albicans (strain SC5314 / ATCC MYA-2876) (Yeast), this protein is Dolichyl-phosphate-mannose--protein mannosyltransferase 6 (PMT6).